Reading from the N-terminus, the 145-residue chain is Large ribosomal subunit protein uL13 (145 aa).

Belongs to the universal ribosomal protein uL13 family. In terms of assembly, part of the 50S ribosomal subunit.

This protein is one of the early assembly proteins of the 50S ribosomal subunit, although it is not seen to bind rRNA by itself. It is important during the early stages of 50S assembly. The chain is Large ribosomal subunit protein uL13 from Staphylococcus epidermidis (strain ATCC 35984 / DSM 28319 / BCRC 17069 / CCUG 31568 / BM 3577 / RP62A).